Here is a 338-residue protein sequence, read N- to C-terminus: 1-aminocyclopropane-1-carboxylate deaminase (338 aa).

Lys51 carries the N6-(pyridoxal phosphate)lysine modification. Ser78 (nucleophile) is an active-site residue.

This sequence belongs to the ACC deaminase/D-cysteine desulfhydrase family. As to quaternary structure, homotrimer. Pyridoxal 5'-phosphate is required as a cofactor.

It carries out the reaction 1-aminocyclopropane-1-carboxylate + H2O = 2-oxobutanoate + NH4(+). In terms of biological role, catalyzes a cyclopropane ring-opening reaction, the irreversible conversion of 1-aminocyclopropane-1-carboxylate (ACC) to ammonia and alpha-ketobutyrate. Allows growth on ACC as a nitrogen source. The protein is 1-aminocyclopropane-1-carboxylate deaminase of Ralstonia nicotianae (strain ATCC BAA-1114 / GMI1000) (Ralstonia solanacearum).